The primary structure comprises 631 residues: Glutamyl-tRNA(Gln) amidotransferase subunit E (631 aa).

Belongs to the GatB/GatE family. GatE subfamily. In terms of assembly, heterodimer of GatD and GatE.

It carries out the reaction L-glutamyl-tRNA(Gln) + L-glutamine + ATP + H2O = L-glutaminyl-tRNA(Gln) + L-glutamate + ADP + phosphate + H(+). Functionally, allows the formation of correctly charged Gln-tRNA(Gln) through the transamidation of misacylated Glu-tRNA(Gln) in organisms which lack glutaminyl-tRNA synthetase. The reaction takes place in the presence of glutamine and ATP through an activated gamma-phospho-Glu-tRNA(Gln). The GatDE system is specific for glutamate and does not act on aspartate. The protein is Glutamyl-tRNA(Gln) amidotransferase subunit E of Methanococcus maripaludis (strain C7 / ATCC BAA-1331).